The primary structure comprises 281 residues: Bifunctional protein FolD (281 aa).

NADP(+)-binding positions include 165–167 (GRG), threonine 192, and valine 233.

The protein belongs to the tetrahydrofolate dehydrogenase/cyclohydrolase family. As to quaternary structure, homodimer.

It catalyses the reaction (6R)-5,10-methylene-5,6,7,8-tetrahydrofolate + NADP(+) = (6R)-5,10-methenyltetrahydrofolate + NADPH. The enzyme catalyses (6R)-5,10-methenyltetrahydrofolate + H2O = (6R)-10-formyltetrahydrofolate + H(+). Its pathway is one-carbon metabolism; tetrahydrofolate interconversion. Its function is as follows. Catalyzes the oxidation of 5,10-methylenetetrahydrofolate to 5,10-methenyltetrahydrofolate and then the hydrolysis of 5,10-methenyltetrahydrofolate to 10-formyltetrahydrofolate. In Corynebacterium diphtheriae (strain ATCC 700971 / NCTC 13129 / Biotype gravis), this protein is Bifunctional protein FolD.